The chain runs to 172 residues: Putative metal-dependent hydrolase OB0782 (172 aa).

Positions 64, 155, and 159 each coordinate Zn(2+).

The protein belongs to the metal hydrolase YfiT family. As to quaternary structure, homodimer. It depends on Zn(2+) as a cofactor.

It is found in the cytoplasm. Functionally, possible metal-dependent hydrolase. This Oceanobacillus iheyensis (strain DSM 14371 / CIP 107618 / JCM 11309 / KCTC 3954 / HTE831) protein is Putative metal-dependent hydrolase OB0782.